The following is a 320-amino-acid chain: Polyprenal reductase 1 (320 aa).

6 helical membrane-spanning segments follow: residues 5–25 (IVWL…LPLV), 64–84 (FFGH…AATW), 143–163 (MHIL…LSLC), 200–220 (PLMK…WGWI), 243–263 (IIPY…AEIV), and 266–286 (LGLL…FGFV).

Belongs to the steroid 5-alpha reductase family. Polyprenal reductase subfamily. As to expression, expressed in roots and flowers.

The protein localises to the cell membrane. It catalyses the reaction a di-trans,poly-cis-dolichal + NADP(+) = a di-trans,poly-cis-polyprenal + NADPH + H(+). It functions in the pathway protein modification; protein glycosylation. Plays a key role in early steps of protein N-linked glycosylation by being involved in the conversion of polyprenol into dolichol. Acts as a polyprenal reductase that mediates the reduction of polyprenal into dolichal in a NADP-dependent mechanism. Dolichols are required for the synthesis of dolichol-linked monosaccharides and the oligosaccharide precursor used for N-glycosylation. Involved in the regulation of plant growth and reproductive processes. The sequence is that of Polyprenal reductase 1 from Arabidopsis thaliana (Mouse-ear cress).